Here is a 128-residue protein sequence, read N- to C-terminus: Translation initiation factor 5A (128 aa).

Lysine 35 is modified (hypusine).

It belongs to the eIF-5A family.

It is found in the cytoplasm. In terms of biological role, functions by promoting the formation of the first peptide bond. This chain is Translation initiation factor 5A (eIF5A), found in Methanocella arvoryzae (strain DSM 22066 / NBRC 105507 / MRE50).